The primary structure comprises 778 residues: DEK domain-containing chromatin-associated protein 4 (778 aa).

Disordered stretches follow at residues Met-1–Arg-334 and Leu-475–Glu-689. Over residues Ala-14–Ala-26 the composition is skewed to polar residues. 4 stretches are compositionally biased toward basic and acidic residues: residues Glu-40–Asp-95, Ala-121–Gly-153, Glu-165–Asn-185, and Thr-209–Lys-243. Residues Lys-191–Arg-300 are a coiled coil. Positions Asp-244–Asp-286 are enriched in acidic residues. Basic and acidic residues-rich tracts occupy residues Lys-287 to Lys-296 and Gly-303 to Pro-323. Residues Asp-289 to Lys-296 carry the Nuclear localization signal 1 motif. Residues Pro-489–Ala-496 carry the Nuclear localization signal 2 motif. Residues Lys-491–Lys-502 are compositionally biased toward low complexity. The stretch at Asp-526–Lys-587 forms a coiled coil. Composition is skewed to acidic residues over residues Asp-527–Glu-553 and Ser-560–Glu-582. The short motif at Pro-618–Arg-625 is the Nuclear localization signal 3 element. The span at Ala-621–Lys-631 shows a compositional bias: basic residues. Residues Lys-678–Glu-689 show a composition bias toward basic and acidic residues. Positions Glu-685–Thr-740 constitute a DEK-C domain. 2 DNA-binding regions span residues Asp-703–Asp-717 and Lys-732–Gln-736. Residues Lys-732–Lys-766 are a coiled coil. Residues Lys-741–Ala-778 form a disordered region. Over residues Glu-745–Glu-763 the composition is skewed to acidic residues. The segment covering Lys-764 to Ala-778 has biased composition (basic and acidic residues).

Interacts with DEK3.

The protein localises to the nucleus. It is found in the nucleolus. In terms of biological role, chromatin-associated protein which contributes to the modulation of chromatin structure (such as super-helical structure of DNA) and function. Binds to chromatin of protein-coding genes throughout the genome to regulate nucleosome occupancy and chromatin accessibility, and to modulate the expression of target genes. The chain is DEK domain-containing chromatin-associated protein 4 from Arabidopsis thaliana (Mouse-ear cress).